The primary structure comprises 438 residues: Thymidine phosphorylase (438 aa).

It belongs to the thymidine/pyrimidine-nucleoside phosphorylase family. Homodimer.

It catalyses the reaction thymidine + phosphate = 2-deoxy-alpha-D-ribose 1-phosphate + thymine. The protein operates within pyrimidine metabolism; dTMP biosynthesis via salvage pathway; dTMP from thymine: step 1/2. Its function is as follows. The enzymes which catalyze the reversible phosphorolysis of pyrimidine nucleosides are involved in the degradation of these compounds and in their utilization as carbon and energy sources, or in the rescue of pyrimidine bases for nucleotide synthesis. The polypeptide is Thymidine phosphorylase (Burkholderia cenocepacia (strain ATCC BAA-245 / DSM 16553 / LMG 16656 / NCTC 13227 / J2315 / CF5610) (Burkholderia cepacia (strain J2315))).